The primary structure comprises 216 residues: MKQDPRFPNLSILNHPLIQHKLTHMRDKDTSTRTFRELLREITLLMGYEITRNLPLTSRHIDTPMGPMEAPVIAGRKLAVVPVLRAGVGMSDGLVELIPSARIGHIGVYRDDQHRPVEYLVRLPDLEDRTFILCDPMVATGYSAVHAVDVMKKRGVPDENILFLALVAAPEGVEVFQKAHPGVKLFVASLDSHLDENAYIIPGLGDAGDRLFGTKN.

Residues Arg85, Arg110, and 135–143 (DPMVATGYS) each bind 5-phospho-alpha-D-ribose 1-diphosphate. Residues Ile200 and 205–207 (GDA) contribute to the uracil site. Asp206 lines the 5-phospho-alpha-D-ribose 1-diphosphate pocket.

The protein belongs to the UPRTase family. Mg(2+) serves as cofactor.

The enzyme catalyses UMP + diphosphate = 5-phospho-alpha-D-ribose 1-diphosphate + uracil. The protein operates within pyrimidine metabolism; UMP biosynthesis via salvage pathway; UMP from uracil: step 1/1. With respect to regulation, allosterically activated by GTP. Catalyzes the conversion of uracil and 5-phospho-alpha-D-ribose 1-diphosphate (PRPP) to UMP and diphosphate. The chain is Uracil phosphoribosyltransferase from Ralstonia pickettii (strain 12J).